The sequence spans 475 residues: Trifunctional enzyme subunit beta, mitochondrial (475 aa).

The transit peptide at 1 to 34 directs the protein to the mitochondrion; it reads MISLLTYTLKNLPNTSKWALRFCMRPLSSSSQLQ. Position 73 is an N6-acetyllysine; alternate (lysine 73). Lysine 73 is subject to N6-succinyllysine; alternate. The active-site Acyl-thioester intermediate is cysteine 139. The stretch at 174–221 is an intramembrane region; the sequence is IRHSRKMRKMMLDLNKAKTLAQRLSIISKFRLNFLSPELPAVSEFSTS. N6-acetyllysine; alternate is present on lysine 189. Lysine 189 carries the post-translational modification N6-succinyllysine; alternate. An N6-succinyllysine mark is found at lysine 191 and lysine 292. At lysine 294 the chain carries N6-acetyllysine; alternate. The residue at position 294 (lysine 294) is an N6-succinyllysine; alternate. Lysine 299 carries the post-translational modification N6-acetyllysine. An N6-acetyllysine; alternate modification is found at lysine 333. At lysine 333 the chain carries N6-succinyllysine; alternate. N6-acetyllysine occurs at positions 349 and 362. The Proton donor/acceptor role is filled by cysteine 459.

Belongs to the thiolase-like superfamily. Thiolase family. In terms of assembly, heterotetramer of 2 alpha/HADHA and 2 beta/HADHB subunits; forms the mitochondrial trifunctional enzyme. Also purified as higher order heterooligomers including a 4 alpha/HADHA and 4 beta/HADHB heterooligomer which physiological significance remains unclear. The mitochondrial trifunctional enzyme interacts with MTLN. Interacts with RSAD2/viperin.

Its subcellular location is the mitochondrion. The protein resides in the mitochondrion inner membrane. The protein localises to the mitochondrion outer membrane. It is found in the endoplasmic reticulum. It catalyses the reaction an acyl-CoA + acetyl-CoA = a 3-oxoacyl-CoA + CoA. The enzyme catalyses butanoyl-CoA + acetyl-CoA = 3-oxohexanoyl-CoA + CoA. It carries out the reaction hexanoyl-CoA + acetyl-CoA = 3-oxooctanoyl-CoA + CoA. The catalysed reaction is octanoyl-CoA + acetyl-CoA = 3-oxodecanoyl-CoA + CoA. It catalyses the reaction decanoyl-CoA + acetyl-CoA = 3-oxododecanoyl-CoA + CoA. The enzyme catalyses dodecanoyl-CoA + acetyl-CoA = 3-oxotetradecanoyl-CoA + CoA. It carries out the reaction tetradecanoyl-CoA + acetyl-CoA = 3-oxohexadecanoyl-CoA + CoA. It participates in lipid metabolism; fatty acid beta-oxidation. Functionally, mitochondrial trifunctional enzyme catalyzes the last three of the four reactions of the mitochondrial beta-oxidation pathway. The mitochondrial beta-oxidation pathway is the major energy-producing process in tissues and is performed through four consecutive reactions breaking down fatty acids into acetyl-CoA. Among the enzymes involved in this pathway, the trifunctional enzyme exhibits specificity for long-chain fatty acids. Mitochondrial trifunctional enzyme is a heterotetrameric complex composed of two proteins, the trifunctional enzyme subunit alpha/HADHA carries the 2,3-enoyl-CoA hydratase and the 3-hydroxyacyl-CoA dehydrogenase activities, while the trifunctional enzyme subunit beta/HADHB described here bears the 3-ketoacyl-CoA thiolase activity. The chain is Trifunctional enzyme subunit beta, mitochondrial (HADHB) from Bos taurus (Bovine).